The chain runs to 137 residues: Histone H2B.3 (137 aa).

Over residues 1-37 the composition is skewed to basic and acidic residues; the sequence is KPAEKKPAEKTPVAEKAPAEKKPKAGKKLPKDAAAGD. Positions 1–45 are disordered; that stretch reads KPAEKKPAEKTPVAEKAPAEKKPKAGKKLPKDAAAGDKKKKRSKK. An N6-acetyllysine mark is found at Lys27 and Lys28. Lys133 is covalently cross-linked (Glycyl lysine isopeptide (Lys-Gly) (interchain with G-Cter in ubiquitin)).

It belongs to the histone H2B family. The nucleosome is a histone octamer containing two molecules each of H2A, H2B, H3 and H4 assembled in one H3-H4 heterotetramer and two H2A-H2B heterodimers. The octamer wraps approximately 147 bp of DNA. Can be acetylated to formH2BK33ac and H2BK34ac. Post-translationally, monoubiquitinated to form H2BK143ub1; may give a specific tag for epigenetic transcriptional activation. As to expression, ubiquitous. Highest level in shoots, fruits and young flower buds, including petals, anthers and ovules.

It localises to the nucleus. It is found in the chromosome. Functionally, core component of nucleosome. Nucleosomes wrap and compact DNA into chromatin, limiting DNA accessibility to the cellular machineries which require DNA as a template. Histones thereby play a central role in transcription regulation, DNA repair, DNA replication and chromosomal stability. DNA accessibility is regulated via a complex set of post-translational modifications of histones, also called histone code, and nucleosome remodeling. This Solanum lycopersicum (Tomato) protein is Histone H2B.3 (H2B-3).